Here is a 412-residue protein sequence, read N- to C-terminus: L-cysteine:1D-myo-inositol 2-amino-2-deoxy-alpha-D-glucopyranoside ligase (412 aa).

Cys-43 is a Zn(2+) binding site. Residues 43–46, Thr-58, and 81–83 contribute to the L-cysteinyl-5'-AMP site; these read CGIT and NVT. Residues 45 to 55 carry the 'HIGH' region motif; that stretch reads ITPYDATHLGH. The 'ERGGDP' region motif lies at 187-192; it reads ERGGDP. Trp-227 provides a ligand contact to L-cysteinyl-5'-AMP. Residue Cys-231 participates in Zn(2+) binding. Residue 249–251 participates in L-cysteinyl-5'-AMP binding; sequence GSD. His-256 contacts Zn(2+). Ile-283 provides a ligand contact to L-cysteinyl-5'-AMP. The short motif at 289–293 is the 'KMSKS' region element; sequence KMSKS.

The protein belongs to the class-I aminoacyl-tRNA synthetase family. MshC subfamily. As to quaternary structure, monomer. It depends on Zn(2+) as a cofactor.

It catalyses the reaction 1D-myo-inositol 2-amino-2-deoxy-alpha-D-glucopyranoside + L-cysteine + ATP = 1D-myo-inositol 2-(L-cysteinylamino)-2-deoxy-alpha-D-glucopyranoside + AMP + diphosphate + H(+). In terms of biological role, catalyzes the ATP-dependent condensation of GlcN-Ins and L-cysteine to form L-Cys-GlcN-Ins. In Saccharopolyspora erythraea (strain ATCC 11635 / DSM 40517 / JCM 4748 / NBRC 13426 / NCIMB 8594 / NRRL 2338), this protein is L-cysteine:1D-myo-inositol 2-amino-2-deoxy-alpha-D-glucopyranoside ligase.